Reading from the N-terminus, the 1028-residue chain is MRAARALLPLLLQACWTAAQDEPETPRAVAFQDCPVDLFFVLDTSESVALRLKPYGALVDKVKSFTKRFIDNLRDRYYRCDRNLVWNAGALHYSDEVEIIQGLTRMPGGRDALKSSVDAVKYFGKGTYTDCAIKKGLEQLLVGGSHLKENKYLIVVTDGHPLEGYKEPCGGLEDAVNEAKHLGVKVFSVAITPDHLEPRLSIIATDHTYRRNFTAADWGQSRDAEEAISQTIDTIVDMIKNNVEQVCCSFECQPARGPPGLRGDPGFEGERGKPGLPGEKGEAGDPGRPGDLGPVGYQGMKGEKGSRGEKGSRGPKGYKGEKGKRGIDGVDGVKGEMGYPGLPGCKGSPGFDGIQGPPGPKGDPGAFGLKGEKGEPGADGEAGRPGSSGPSGDEGQPGEPGPPGEKGEAGDEGNPGPDGAPGERGGPGERGPRGTPGTRGPRGDPGEAGPQGDQGREGPVGVPGDPGEAGPIGPKGYRGDEGPPGSEGARGAPGPAGPPGDPGLMGERGEDGPAGNGTEGFPGFPGYPGNRGAPGINGTKGYPGLKGDEGEAGDPGDDNNDIAPRGVKGAKGYRGPEGPQGPPGHQGPPGPDECEILDIIMKMCSCCECKCGPIDLLFVLDSSESIGLQNFEIAKDFVVKVIDRLSRDELVKFEPGQSYAGVVQYSHSQMQEHVSLRSPSIRNVQELKEAIKSLQWMAGGTFTGEALQYTRDQLLPPSPNNRIALVITDGRSDTQRDTTPLNVLCSPGIQVVSVGIKDVFDFIPGSDQLNVISCQGLAPSQGRPGLSLVKENYAELLEDAFLKNVTAQICIDKKCPDYTCPITFSSPADITILLDGSASVGSHNFDTTKRFAKRLAERFLTAGRTDPAHDVRVAVVQYSGTGQQRPERASLQFLQNYTALASAVDAMDFINDATDVNDALGYVTRFYREASSGAAKKRLLLFSDGNSQGATPAAIEKAVQEAQRAGIEIFVVVVGRQVNEPHIRVLVTGKTAEYDVAYGESHLFRVPSYQALLRGVFHQTVSRKVALG.

The first 19 residues, 1–19, serve as a signal peptide directing secretion; the sequence is MRAARALLPLLLQACWTAA. Residues 20–256 form an N-terminal globular domain region; that stretch reads QDEPETPRAV…CCSFECQPAR (237 aa). The VWFA 1 domain occupies 37-235; it reads DLFFVLDTSE…EAISQTIDTI (199 aa). N-linked (GlcNAc...) asparagine glycosylation occurs at Asn-212. The segment at 254-590 is disordered; it reads PARGPPGLRG…GPPGHQGPPG (337 aa). Residues 257–592 are triple-helical region; that stretch reads GPPGLRGDPG…PGHQGPPGPD (336 aa). The Cell attachment site signature appears at 262–264; sequence RGD. Basic and acidic residues-rich tracts occupy residues 268–285 and 301–334; these read EGERGKPGLPGEKGEAGD and KGEKGSRGEKGSRGPKGYKGEKGKRGIDGVDGVK. Residues 384 to 394 are compositionally biased toward low complexity; the sequence is RPGSSGPSGDE. Positions 442–444 match the Cell attachment site motif; sequence RGD. Over residues 457-471 the composition is skewed to low complexity; that stretch reads EGPVGVPGDPGEAGP. A Cell attachment site motif is present at residues 478-480; the sequence is RGD. Over residues 483–493 the composition is skewed to low complexity; the sequence is PPGSEGARGAP. Residues Asn-516 and Asn-537 are each glycosylated (N-linked (GlcNAc...) asparagine). The segment covering 550 to 560 has biased composition (acidic residues); sequence GEAGDPGDDNN. The segment covering 579-590 has biased composition (pro residues); sequence PQGPPGHQGPPG. The interval 593–1028 is C-terminal globular domain; sequence ECEILDIIMK…QTVSRKVALG (436 aa). 2 VWFA domains span residues 615 to 805 and 829 to 1021; these read DLLF…LKNV and DITI…HQTV. N-linked (GlcNAc...) asparagine glycosylation is found at Asn-804 and Asn-896.

It belongs to the type VI collagen family. As to quaternary structure, trimers composed of three different chains: alpha-1(VI), alpha-2(VI), and alpha-3(VI) or alpha-5(VI) or alpha-6(VI). Prolines at the third position of the tripeptide repeating unit (G-X-Y) are hydroxylated in some or all of the chains.

It is found in the secreted. Its subcellular location is the extracellular space. The protein localises to the extracellular matrix. Functionally, collagen VI acts as a cell-binding protein. In Homo sapiens (Human), this protein is Collagen alpha-1(VI) chain (COL6A1).